The chain runs to 97 residues: Exodeoxyribonuclease 7 small subunit (97 aa).

Residues 1–22 form a disordered region; it reads MAKTASPGATPPGNGTEPLPDN.

The protein belongs to the XseB family. In terms of assembly, heterooligomer composed of large and small subunits.

Its subcellular location is the cytoplasm. It carries out the reaction Exonucleolytic cleavage in either 5'- to 3'- or 3'- to 5'-direction to yield nucleoside 5'-phosphates.. In terms of biological role, bidirectionally degrades single-stranded DNA into large acid-insoluble oligonucleotides, which are then degraded further into small acid-soluble oligonucleotides. This is Exodeoxyribonuclease 7 small subunit from Burkholderia lata (strain ATCC 17760 / DSM 23089 / LMG 22485 / NCIMB 9086 / R18194 / 383).